Consider the following 430-residue polypeptide: Stress protein DDR48 (430 aa).

Residues 1–430 (MGLFDKVKQF…RNQYGGDDDY (430 aa)) are disordered. The segment covering 12-27 (NSNNNNNDSGNNNQGD) has biased composition (low complexity). The segment covering 37–60 (GEDRVNQFKSKIGEDRFDKMESKV) has biased composition (basic and acidic residues). A compositionally biased stretch (low complexity) spans 70 to 421 (NDNDSNNNDS…SYGSSNRGGR (352 aa)). Repeat copies occupy residues 74-81 (SNNNDSYG), 82-89 (SNNNDSYG), 90-97 (SNNNDSYG), 98-105 (SNNNDSYG), 106-113 (SNNNDSYG), and 114-121 (SNNDDSYG). The 38 X 8 AA approximate tandem repeats of S-[NS]-N-[ND]-D-S-Y-G stretch occupies residues 74–414 (SNNNDSYGSN…GSSNNDDSYG (341 aa)). The stretch at 124–131 (NKKKSSYG) is one 7; approximate repeat. Repeat copies occupy residues 132 to 139 (SNNDDSYG), 141 to 148 (SNNNDSYG), 149 to 156 (SNNNDSYG), 157 to 164 (SNNNDSYG), and 165 to 172 (SNNDDSYG). One copy of the 13; approximate repeat lies at 175–182 (NKNKSSYG). A phosphoserine mark is found at serine 183 and serine 191. 2 tandem repeats follow at residues 183 to 190 (SNNDDSYG) and 191 to 198 (SNNDDSYG). Residues 201-208 (NKKKSSYG) form a 16; approximate repeat. Repeat copies occupy residues 209-216 (SSNNDSYG), 217-224 (SNNDDSYG), 225-232 (SNNNDSYG), and 233-240 (SNNDDSYG). Residues 243–250 (NKKKSSYG) form a 21; approximate repeat. 3 consecutive repeat copies span residues 251 to 258 (SNNDDSYG), 260 to 267 (SNNNDSYG), and 268 to 275 (SNNDDSYG). One copy of the 25; approximate repeat lies at 278–285 (NKNKSSYG). Repeat copies occupy residues 287–294 (SSNDDSYG) and 296–303 (SNNDDSYG). A 28; approximate repeat occupies 306 to 313 (NKKKSSYG). Serine 314 and serine 322 each carry phosphoserine. 2 consecutive repeat copies span residues 314-321 (SNNDDSYG) and 322-329 (SNNDDSYG). A 31; approximate repeat occupies 332–339 (NKKKSSYG). Repeat copies occupy residues 340 to 347 (SSNNDSYG) and 348 to 355 (SNNDDSYG). A 34; approximate repeat occupies 358–365 (NKKKSSYG). Repeat copies occupy residues 366–373 (SNNDDSYG) and 375–382 (SNNNDSYG). The stretch at 393 to 400 (NRNKNSYG) is one 37; approximate repeat. Residues 407-414 (SNNDDSYG) form repeat 38.

This sequence belongs to the DDR48 family. Post-translationally, probably highly glycosylated.

Its function is as follows. DNA damage-responsive protein that may be required for maintaining the rate of spontaneous mutagenesis. Shows low ATP and GTP hydrolysis activity. Dispensable for acquisition of thermotolerance and does not play a significant role in recovery or protection of cells from acute heat shock. In Saccharomyces cerevisiae (strain ATCC 204508 / S288c) (Baker's yeast), this protein is Stress protein DDR48 (DDR48).